We begin with the raw amino-acid sequence, 157 residues long: Transcription elongation factor GreA (157 aa).

It belongs to the GreA/GreB family.

Necessary for efficient RNA polymerase transcription elongation past template-encoded arresting sites. The arresting sites in DNA have the property of trapping a certain fraction of elongating RNA polymerases that pass through, resulting in locked ternary complexes. Cleavage of the nascent transcript by cleavage factors such as GreA or GreB allows the resumption of elongation from the new 3'terminus. GreA releases sequences of 2 to 3 nucleotides. This Azorhizobium caulinodans (strain ATCC 43989 / DSM 5975 / JCM 20966 / LMG 6465 / NBRC 14845 / NCIMB 13405 / ORS 571) protein is Transcription elongation factor GreA.